The following is a 151-amino-acid chain: Group 10 secretory phospholipase A2 (151 aa).

The first 17 residues, 1–17 (MLLLLLLLLLGPGPGFS), serve as a signal peptide directing secretion. The propeptide occupies 18–28 (EATRRSHVYKR). Cystine bridges form between Cys39/Cys97, Cys53/Cys143, Cys55/Cys71, Cys70/Cys125, Cys76/Cys150, Cys77/Cys118, Cys86/Cys111, and Cys104/Cys116. Ca(2+) is bound by residues Tyr54, Gly56, and Gly58. His74 is a catalytic residue. Asp75 provides a ligand contact to Ca(2+). Asp119 is a catalytic residue.

The protein belongs to the phospholipase A2 family. In terms of assembly, interacts with PLA2R1; this interaction mediates PLA2G10 clearance and inactivation. The cofactor is Ca(2+). In terms of tissue distribution, expressed at high levels in testis and the gastrointestinal tract including stomach and colon. Expressed at lower levels in other tissues including small intestine, uterus, oviduct, lung, thymus, spleen and brain. Expressed in Paneth-like secretory epithelial cells of the colon. Expressed in gastric and ileac epithelial cells and in glandular epithelium of intestinal mucosa (at protein level). Expressed in late spermatogenic cells, spermatocytes and spermatids, but not spermatogonia in seminiferous tubules (at protein level). Expressed mainly in the apical side of endometrial epithelial cells and in the interstitium beneath the epithelium of uterus (at protein level). Expressed in resident spleen macrophages (at protein level). Expressed at outermost layer of hair follicles. Expressed in dorsal root ganglia in both NEFH-positive A-fibers and PRPH-positive C-fibers (at protein level).

Its subcellular location is the secreted. The protein resides in the lysosome. The protein localises to the cytoplasmic vesicle. It is found in the secretory vesicle. It localises to the acrosome. It carries out the reaction a 1,2-diacyl-sn-glycero-3-phosphocholine + H2O = a 1-acyl-sn-glycero-3-phosphocholine + a fatty acid + H(+). The catalysed reaction is 1-hexadecanoyl-2-(9Z-octadecenoyl)-sn-glycero-3-phosphocholine + H2O = 1-hexadecanoyl-sn-glycero-3-phosphocholine + (9Z)-octadecenoate + H(+). The enzyme catalyses 1-octadecanoyl-2-(5Z,8Z,11Z,14Z-eicosatetraenoyl)-sn-glycero-3-phosphocholine + H2O = 1-octadecanoyl-sn-glycero-3-phosphocholine + (5Z,8Z,11Z,14Z)-eicosatetraenoate + H(+). It catalyses the reaction 1,2-dihexadecanoyl-sn-glycero-3-phosphocholine + H2O = 1-hexadecanoyl-sn-glycero-3-phosphocholine + hexadecanoate + H(+). It carries out the reaction 1-hexadecanoyl-2-(9Z-octadecenoyl)-sn-glycero-3-phosphoglycerol + H2O = 1-hexadecanoyl-sn-glycero-3-phosphoglycerol + (9Z)-octadecenoate + H(+). The catalysed reaction is 1,2-dihexadecanoyl-sn-glycero-3-phospho-(1'-sn-glycerol) + H2O = 1-hexadecanoyl-sn-glycero-3-phospho-(1'-sn-glycerol) + hexadecanoate + H(+). The enzyme catalyses 1-hexadecanoyl-2-(9Z-octadecenoyl)-sn-glycero-3-phospho-L-serine + H2O = 1-hexadecanoyl-sn-glycero-3-phospho-L-serine + (9Z)-octadecenoate + H(+). It catalyses the reaction 1-hexadecanoyl-2-(9Z,12Z-octadecadienoyl)-sn-glycero-3-phosphoethanolamine + H2O = 1-hexadecanoyl-sn-glycero-3-phosphoethanolamine + (9Z,12Z)-octadecadienoate + H(+). It carries out the reaction 1-hexadecanoyl-2-(9Z-octadecenoyl)-sn-glycero-3-phosphate + H2O = 1-hexadecanoyl-sn-glycero-3-phosphate + (9Z)-octadecenoate + H(+). The catalysed reaction is 1-O-hexadecyl-2-acetyl-sn-glycero-3-phosphocholine + H2O = 1-O-hexadecyl-sn-glycero-3-phosphocholine + acetate + H(+). Functionally, secretory calcium-dependent phospholipase A2 that primarily targets extracellular phospholipids. Hydrolyzes the ester bond of the fatty acyl group attached at sn-2 position of phospholipids with preference for phosphatidylcholines and phosphatidylglycerols over phosphatidylethanolamines. Preferentially releases sn-2 omega-6 and omega-3 polyunsaturated fatty acyl (PUFA) chains over saturated fatty acyls. Contributes to phospholipid remodeling of very low-density lipoprotein (VLDL), low-density lipoprotein (LDL) and high-density lipoprotein (HDL) particles. Hydrolyzes LDL phospholipids releasing unsaturated fatty acids that regulate macrophage differentiation toward foam cells. Efficiently hydrolyzes and inactivates PAF, a potent lipid mediator present in oxidized LDL. May act in an autocrine and paracrine manner. Secreted by lung epithelium, targets membrane phospholipids of infiltrating eosinophils, releasing arachidonate and boosting eicosanoid and cysteinyl leukotriene synthesis involved in airway inflammatory response. Secreted by gut epithelium, hydrolyzes dietary and biliary phosphatidylcholines in the gastrointestinal lumen, thereby regulating adipogenesis and body weight. Plays a stem cell regulator role in colon epithelium. Within intracellular compartment, mediates Paneth-like cell differentiation and its stem cell supporting functions by inhibiting Wnt signaling pathway in intestinal stem cell (ISC). Secreted in the intestinal lumen upon inflammation, acts in an autocrine way and promotes prostaglandin E2 synthesis that stimulates the Wnt signaling pathway in ISCs and tissue regeneration. May participate in hair follicle morphogenesis by regulating phosphatidylethanolamines metabolism at the outermost epithelial layer and facilitating melanin synthesis. By generating lysophosphatidylcholines (LPCs) at sperm acrosome controls sperm cell capacitation, acrosome reaction and overall fertility. May promote neurite outgrowth in neuron fibers involved in nociception. Contributes to lipid remodeling of cellular membranes and generation of lipid mediators involved in pathogen clearance. Cleaves sn-2 fatty acyl chains of phosphatidylglycerols and phosphatidylethanolamines, which are major components of membrane phospholipids in bacteria. Displays bactericidal activity against Gram-positive bacteria by directly hydrolyzing phospholipids of the bacterial membrane. In pulmonary epithelium, may contribute to host defense response against adenoviral infection. Prevents adenovirus entry into host cells by hydrolyzing host cell plasma membrane, releasing C16:0 LPCs that inhibit virus-mediated membrane fusion and viral infection. Likely prevents adenoviral entry into the endosomes of host cells. May play a role in maturation and activation of innate immune cells including macrophages, group 2 innate lymphoid cells and mast cells. This Mus musculus (Mouse) protein is Group 10 secretory phospholipase A2 (Pla2g10).